Here is a 555-residue protein sequence, read N- to C-terminus: Esterase-5A (555 aa).

Residues 1–19 (MHLVRWLICLIQLWIQLGA) form the signal peptide. The cysteines at positions 87 and 106 are disulfide-linked. Asn-95 and Asn-116 each carry an N-linked (GlcNAc...) asparagine glycan. The Acyl-ester intermediate role is filled by Ser-210. Cysteines 262 and 274 form a disulfide. 2 N-linked (GlcNAc...) asparagine glycosylation sites follow: Asn-479 and Asn-510. An intrachain disulfide couples Cys-518 to Cys-539.

Belongs to the type-B carboxylesterase/lipase family.

The protein localises to the secreted. It catalyses the reaction a carboxylic ester + H2O = an alcohol + a carboxylate + H(+). The sequence is that of Esterase-5A (Est-5A) from Drosophila miranda (Fruit fly).